A 200-amino-acid chain; its full sequence is Large ribosomal subunit protein uL4 (200 aa).

Residues 42 to 65 are disordered; sequence TRAQKTRSEVSGGGAKPWRQKGTG.

The protein belongs to the universal ribosomal protein uL4 family. As to quaternary structure, part of the 50S ribosomal subunit.

Functionally, one of the primary rRNA binding proteins, this protein initially binds near the 5'-end of the 23S rRNA. It is important during the early stages of 50S assembly. It makes multiple contacts with different domains of the 23S rRNA in the assembled 50S subunit and ribosome. Its function is as follows. Forms part of the polypeptide exit tunnel. This chain is Large ribosomal subunit protein uL4, found in Vibrio campbellii (strain ATCC BAA-1116).